A 668-amino-acid chain; its full sequence is tRNA 5-methylaminomethyl-2-thiouridine biosynthesis bifunctional protein MnmC (668 aa).

Residues 1–245 (MKHYSIQPAN…KREMLCGVME (245 aa)) are tRNA (mnm(5)s(2)U34)-methyltransferase. The tract at residues 270–668 (IGGGIASALL…LLKGKAVKAG (399 aa)) is FAD-dependent cmnm(5)s(2)U34 oxidoreductase.

This sequence in the N-terminal section; belongs to the methyltransferase superfamily. tRNA (mnm(5)s(2)U34)-methyltransferase family. It in the C-terminal section; belongs to the DAO family. Requires FAD as cofactor.

It is found in the cytoplasm. It carries out the reaction 5-aminomethyl-2-thiouridine(34) in tRNA + S-adenosyl-L-methionine = 5-methylaminomethyl-2-thiouridine(34) in tRNA + S-adenosyl-L-homocysteine + H(+). Its function is as follows. Catalyzes the last two steps in the biosynthesis of 5-methylaminomethyl-2-thiouridine (mnm(5)s(2)U) at the wobble position (U34) in tRNA. Catalyzes the FAD-dependent demodification of cmnm(5)s(2)U34 to nm(5)s(2)U34, followed by the transfer of a methyl group from S-adenosyl-L-methionine to nm(5)s(2)U34, to form mnm(5)s(2)U34. The sequence is that of tRNA 5-methylaminomethyl-2-thiouridine biosynthesis bifunctional protein MnmC from Escherichia coli O6:H1 (strain CFT073 / ATCC 700928 / UPEC).